Reading from the N-terminus, the 534-residue chain is CTP synthase (534 aa).

Positions 1–267 (MTKYIFVTGG…DQIVCDHLKL (267 aa)) are amidoligase domain. Position 13 (Ser-13) interacts with CTP. Ser-13 contacts UTP. 14-19 (SIGKGI) lines the ATP pocket. Tyr-54 contributes to the L-glutamine binding site. Asp-71 provides a ligand contact to ATP. The Mg(2+) site is built by Asp-71 and Glu-141. CTP-binding positions include 148–150 (DIE), 188–193 (KTKPTQ), and Lys-224. Residues 188–193 (KTKPTQ) and Lys-224 each bind UTP. Positions 292 to 534 (KIALVGKYVE…FVTAAVENMK (243 aa)) constitute a Glutamine amidotransferase type-1 domain. Gly-354 contributes to the L-glutamine binding site. Residue Cys-381 is the Nucleophile; for glutamine hydrolysis of the active site. Residues 382–385 (LGMQ), Glu-405, and Arg-463 contribute to the L-glutamine site. Active-site residues include His-508 and Glu-510.

Belongs to the CTP synthase family. As to quaternary structure, homotetramer.

It catalyses the reaction UTP + L-glutamine + ATP + H2O = CTP + L-glutamate + ADP + phosphate + 2 H(+). The catalysed reaction is L-glutamine + H2O = L-glutamate + NH4(+). The enzyme catalyses UTP + NH4(+) + ATP = CTP + ADP + phosphate + 2 H(+). It functions in the pathway pyrimidine metabolism; CTP biosynthesis via de novo pathway; CTP from UDP: step 2/2. With respect to regulation, allosterically activated by GTP, when glutamine is the substrate; GTP has no effect on the reaction when ammonia is the substrate. The allosteric effector GTP functions by stabilizing the protein conformation that binds the tetrahedral intermediate(s) formed during glutamine hydrolysis. Inhibited by the product CTP, via allosteric rather than competitive inhibition. Its function is as follows. Catalyzes the ATP-dependent amination of UTP to CTP with either L-glutamine or ammonia as the source of nitrogen. Regulates intracellular CTP levels through interactions with the four ribonucleotide triphosphates. The sequence is that of CTP synthase from Streptococcus agalactiae serotype V (strain ATCC BAA-611 / 2603 V/R).